A 154-amino-acid polypeptide reads, in one-letter code: Myoglobin (154 aa).

In terms of domain architecture, Globin spans 2–148; it reads GLSDQEWQHV…FRNDMASKYK (147 aa). His65 serves as a coordination point for nitrite. His65 is a binding site for O2. Position 94 (His94) interacts with heme b.

In terms of assembly, monomeric.

The protein resides in the cytoplasm. The protein localises to the sarcoplasm. It catalyses the reaction Fe(III)-heme b-[protein] + nitric oxide + H2O = Fe(II)-heme b-[protein] + nitrite + 2 H(+). The enzyme catalyses H2O2 + AH2 = A + 2 H2O. Monomeric heme protein which primary function is to store oxygen and facilitate its diffusion within muscle tissues. Reversibly binds oxygen through a pentacoordinated heme iron and enables its timely and efficient release as needed during periods of heightened demand. Depending on the oxidative conditions of tissues and cells, and in addition to its ability to bind oxygen, it also has a nitrite reductase activity whereby it regulates the production of bioactive nitric oxide. Under stress conditions, like hypoxia and anoxia, it also protects cells against reactive oxygen species thanks to its pseudoperoxidase activity. The polypeptide is Myoglobin (Dromaius novaehollandiae (Emu)).